Here is a 342-residue protein sequence, read N- to C-terminus: 4-hydroxythreonine-4-phosphate dehydrogenase (342 aa).

Substrate-binding residues include histidine 140 and threonine 141. A divalent metal cation is bound by residues histidine 175, histidine 220, and histidine 275. Lysine 283, asparagine 292, and arginine 301 together coordinate substrate.

This sequence belongs to the PdxA family. In terms of assembly, homodimer. Zn(2+) is required as a cofactor. Requires Mg(2+) as cofactor. The cofactor is Co(2+).

It localises to the cytoplasm. The enzyme catalyses 4-(phosphooxy)-L-threonine + NAD(+) = 3-amino-2-oxopropyl phosphate + CO2 + NADH. It participates in cofactor biosynthesis; pyridoxine 5'-phosphate biosynthesis; pyridoxine 5'-phosphate from D-erythrose 4-phosphate: step 4/5. Catalyzes the NAD(P)-dependent oxidation of 4-(phosphooxy)-L-threonine (HTP) into 2-amino-3-oxo-4-(phosphooxy)butyric acid which spontaneously decarboxylates to form 3-amino-2-oxopropyl phosphate (AHAP). The sequence is that of 4-hydroxythreonine-4-phosphate dehydrogenase from Rhizobium meliloti (strain 1021) (Ensifer meliloti).